Consider the following 354-residue polypeptide: S-adenosylmethionine:tRNA ribosyltransferase-isomerase (354 aa).

Belongs to the QueA family. Monomer.

Its subcellular location is the cytoplasm. The catalysed reaction is 7-aminomethyl-7-carbaguanosine(34) in tRNA + S-adenosyl-L-methionine = epoxyqueuosine(34) in tRNA + adenine + L-methionine + 2 H(+). Its pathway is tRNA modification; tRNA-queuosine biosynthesis. Functionally, transfers and isomerizes the ribose moiety from AdoMet to the 7-aminomethyl group of 7-deazaguanine (preQ1-tRNA) to give epoxyqueuosine (oQ-tRNA). This is S-adenosylmethionine:tRNA ribosyltransferase-isomerase from Azorhizobium caulinodans (strain ATCC 43989 / DSM 5975 / JCM 20966 / LMG 6465 / NBRC 14845 / NCIMB 13405 / ORS 571).